A 1855-amino-acid polypeptide reads, in one-letter code: Unconventional myosin-Va (1855 aa).

An N-acetylalanine modification is found at alanine 2. Residues 8–60 (TKFARVWIPDPEEVWKSAELLKDYKPGDKVLLLHLEEGKDLEYHLDPKTKELP) form the Myosin N-terminal SH3-like domain. The Myosin motor domain occupies 69-763 (VGENDLTALS…QVAYLEKLRA (695 aa)). 163 to 170 (GESGAGKT) contacts ATP. The segment at 598–631 (AISPTSATSSGRTPLTRTPAKPTKGRPGQMAKEH) is disordered. A Phosphoserine modification is found at serine 600. Over residues 600–613 (SPTSATSSGRTPLT) the composition is skewed to polar residues. Residues 643–665 (LHLLMETLNATTPHYVRCIKPND) are actin-binding. 6 consecutive IQ domains span residues 766–788 (LRAA…KYLR), 789–818 (MRKA…TKAA), 814–836 (RTKA…RYKI), 837–861 (RRAA…RKIL), 862–883 (REHK…THYK), and 885–914 (SMHA…EARS). 2 coiled-coil regions span residues 914–1237 (SVER…APEV) and 1338–1445 (VYEG…ELEV). Threonine 1032 carries the post-translational modification Phosphothreonine. Phosphoserine occurs at positions 1452 and 1652. In terms of domain architecture, Dilute spans 1534-1810 (TSTINSIKKV…IRTIQMRLRD (277 aa)). Phosphothreonine is present on threonine 1760.

The protein belongs to the TRAFAC class myosin-kinesin ATPase superfamily. Myosin family. In terms of assembly, may be a homodimer, which associates with multiple calmodulin or myosin light chains. Interacts with RIPL2, the interaction is required for its role in dendrite formation. Interacts with MLPH. Interacts with SYTL4. Interacts with MYRIP. Interacts with RAB10; mediates the transport to the plasma membrane of SLC2A4/GLUT4 storage vesicles. Interacts with FMR1; this interaction occurs in association with polyribosome. As to expression, detected in melanocytes.

The catalysed reaction is ATP + H2O = ADP + phosphate + H(+). In terms of biological role, processive actin-based motor that can move in large steps approximating the 36-nm pseudo-repeat of the actin filament. Can hydrolyze ATP in the presence of actin, which is essential for its function as a motor protein. Involved in melanosome transport. Also mediates the transport of vesicles to the plasma membrane. May also be required for some polarization process involved in dendrite formation. The polypeptide is Unconventional myosin-Va (MYO5A) (Homo sapiens (Human)).